The chain runs to 692 residues: Protein artemis (692 aa).

Position 380 is a phosphothreonine (threonine 380). Serine 385 bears the Phosphoserine mark. Disordered regions lie at residues 503 to 555 (RLEN…DSQS) and 640 to 660 (STNA…PEAE). The segment covering 507–520 (FPSSTEAGGSQSPK) has biased composition (polar residues). Residues 530-543 (THISSQNSSQSTHI) are compositionally biased toward low complexity. Composition is skewed to polar residues over residues 544 to 555 (TEQGSQGWDSQS) and 640 to 650 (STNADSQSSSD). The residue at position 645 (serine 645) is a Phosphoserine; by ATM.

Belongs to the DNA repair metallo-beta-lactamase (DRMBL) family. In terms of assembly, interacts with LIG4; the interaction is direct. Interacts with ATM. Interacts with BRCA1. Interacts with PRKDC. Interacts with TP53BP1. Also exhibits ATM- and phosphorylation-dependent interaction with the MRN complex, composed of MRE11, RAD50, and NBN. Phosphorylation on undefined residues by PRKDC may stimulate endonucleolytic activity on 5' and 3' hairpins and overhangs. PRKDC must remain present, even after phosphorylation, for efficient hairpin opening. Also phosphorylated by ATM in response to ionizing radiation (IR) and by ATR in response to ultraviolet (UV) radiation.

The protein resides in the nucleus. Its function is as follows. Required for V(D)J recombination, the process by which exons encoding the antigen-binding domains of immunoglobulins and T-cell receptor proteins are assembled from individual V, (D), and J gene segments. V(D)J recombination is initiated by the lymphoid specific RAG endonuclease complex, which generates site specific DNA double strand breaks (DSBs). These DSBs present two types of DNA end structures: hairpin sealed coding ends and phosphorylated blunt signal ends. These ends are independently repaired by the non homologous end joining (NHEJ) pathway to form coding and signal joints respectively. This protein exhibits single-strand specific 5'-3' exonuclease activity in isolation, and acquires endonucleolytic activity on 5' and 3' hairpins and overhangs when in a complex with PRKDC. The latter activity is required specifically for the resolution of closed hairpins prior to the formation of the coding joint. May also be required for the repair of complex DSBs induced by ionizing radiation, which require substantial end-processing prior to religation by NHEJ. The protein is Protein artemis (DCLRE1C) of Pongo abelii (Sumatran orangutan).